Here is a 318-residue protein sequence, read N- to C-terminus: Homeobox-leucine zipper protein ATHB-4 (318 aa).

Disordered regions lie at residues 1 to 23 and 128 to 165; these read MGER…KEPS and ARGG…RKKL. The segment covering 8–17 has biased composition (low complexity); the sequence is LGLSLSLGNS. Positions 128–140 are enriched in basic and acidic residues; it reads ARGGDENEAERAS. Residues 160–219 constitute a DNA-binding region (homeobox); sequence GSRKKLRLSKDQALVLEETFKEHSTLNPKQKLALAKQLNLRARQVEVWFQNRRARTKLKQ. Residues 227-248 are leucine-zipper; sequence LKRCCDNLTEENRRLQKEVSEL.

This sequence belongs to the HD-ZIP homeobox family. Class II subfamily.

Its subcellular location is the nucleus. Functionally, probable transcription factor. This is Homeobox-leucine zipper protein ATHB-4 (ATHB-4) from Arabidopsis thaliana (Mouse-ear cress).